The primary structure comprises 803 residues: MAETNLTLLTWAGILCCLIWSGSAQQGGSDCIKANAKSCGECIQAGPNCGWCKKTDFLQEGEPTSARCDDLAALKSKGCPEQDIENPRGSKRVLEDREVTNRKIGAAEKLKPEAITQIQPQKLVLQLRVGEPQTFSLKFKRAEDYPIDLYYLMDLSYSMKDDLENVKSLGTALMREMEKITSDFRIGFGSFVEKTVMPYISTTPAKLRNPCTGDQNCTSPFSYKNVLSLTSEGNKFNELVGKQHISGNLDSPEGGFDAIMQVAVCGDQIGWRNVTRLLVFSTDAGFHFAGDGKLGGIVLPNDGKCHLENNMYTMSHYYDYPSIAHLVQKLSENNIQTIFAVTEEFQAVYKELKNLIPKSAVGTLSSNSSNVIQLIIDAYNSLSSEVILENSKLPKEVTISYKSYCKNGVNDTQEDGRKCSNISIGDEVRFEINVTANECPKKGQNETIKIKPLGFTEEVEIHLQFICDCLCQSEGEPNSPACHDGNGTFECGACRCNEGRIGRLCECSTDEVNSEDMDAYCRRENSTEICSNNGECICGQCVCKKRENTNEVYSGKYCECDNFNCDRSNGLICGGNGICKCRVCECFPNFTGSACDCSLDTTPCMAGNGQICNGRGTCECGTCNCTDPKFQGPTCEMCQTCLGVCAEHKDCVQCRAFEKGEKKETCSQECMHFNMTRVESRGKLPQPVHPDPLSHCKEKDVGDCWFYFTYSVNSNGEASVHVVETPECPSGPDIIPIVAGVVAGIVLIGLALLLIWKLLMIIHDRREFAKFEKEKMNAKWDTGENPIYKSAVTTVVNPKYEGK.

A signal peptide spans 1-24 (MAETNLTLLTWAGILCCLIWSGSA). Glutamine 25 carries the blocked amino end (Gln) modification. Topologically, residues 25–733 (QQGGSDCIKA…ETPECPSGPD (709 aa)) are extracellular. Residues 30-80 (DCIKANAKSCGECIQAGPNCGWCKKTDFLQEGEPTSARCDDLAALKSKGCP) enclose the PSI domain. Disulfide bonds link cysteine 31–cysteine 49, cysteine 39–cysteine 469, cysteine 42–cysteine 68, cysteine 52–cysteine 79, cysteine 211–cysteine 217, cysteine 265–cysteine 305, cysteine 405–cysteine 419, cysteine 439–cysteine 467, cysteine 471–cysteine 491, cysteine 482–cysteine 494, cysteine 496–cysteine 505, cysteine 507–cysteine 538, cysteine 521–cysteine 536, cysteine 530–cysteine 541, cysteine 543–cysteine 558, cysteine 560–cysteine 581, cysteine 565–cysteine 579, cysteine 573–cysteine 584, cysteine 586–cysteine 595, cysteine 597–cysteine 620, cysteine 604–cysteine 618, and cysteine 612–cysteine 623. The 239-residue stretch at 144 to 382 (DYPIDLYYLM…QLIIDAYNSL (239 aa)) folds into the VWFA domain. Mg(2+)-binding residues include serine 156 and serine 158. Ca(2+) is bound by residues serine 158, aspartate 161, aspartate 162, and glutamate 193. The CX3CL1-binding stretch occupies residues 211–217 (CTGDQNC). A glycan (N-linked (GlcNAc...) asparagine) is linked at asparagine 216. Positions 248, 250, 252, and 253 each coordinate Ca(2+). Glutamate 253 is a Mg(2+) binding site. Asparagine 273 carries an N-linked (GlcNAc...) asparagine glycan. Residues 299-318 (LPNDGKCHLENNMYTMSHYY) are CX3CL1-binding. 6 N-linked (GlcNAc...) asparagine glycosylation sites follow: asparagine 367, asparagine 410, asparagine 421, asparagine 433, asparagine 445, and asparagine 486. Residues 387-470 (ILENSKLPKE…IHLQFICDCL (84 aa)) form an interaction with TMEM182 region. I-EGF domains follow at residues 471-506 (CQSE…RLCE), 507-559 (CSTD…KYCE), 560-596 (CDNF…SACD), and 597-636 (CSLD…PTCE). An N-linked (GlcNAc...) asparagine glycan is attached at asparagine 525. The N-linked (GlcNAc...) asparagine glycan is linked to asparagine 589. N-linked (GlcNAc...) asparagine glycosylation occurs at asparagine 624. 6 cysteine pairs are disulfide-bonded: cysteine 625-cysteine 635, cysteine 638-cysteine 641, cysteine 645-cysteine 696, cysteine 651-cysteine 670, cysteine 654-cysteine 666, and cysteine 704-cysteine 728. An N-linked (GlcNAc...) asparagine glycan is attached at asparagine 674. Residues 734–756 (IIPIVAGVVAGIVLIGLALLLIW) form a helical membrane-spanning segment. Residues 757–803 (KLLMIIHDRREFAKFEKEKMNAKWDTGENPIYKSAVTTVVNPKYEGK) are Cytoplasmic-facing. A Phosphotyrosine; by Tyr-kinases modification is found at tyrosine 788.

Belongs to the integrin beta chain family. As to quaternary structure, heterodimer of an alpha and a beta subunit. Beta-1 associates with either alpha-1, alpha-2, alpha-3, alpha-4, alpha-5, alpha-6, alpha-7, alpha-8, alpha-9, alpha-10, alpha-11 or alpha-V. Interacts with TMEM182 and LAMB1. Expressed on surface of embryonic fibroblasts (at protein level).

The protein localises to the cell membrane. It localises to the cell projection. It is found in the invadopodium membrane. The protein resides in the ruffle membrane. Its subcellular location is the melanosome. The protein localises to the lamellipodium. It localises to the ruffle. It is found in the cell junction. The protein resides in the focal adhesion. In terms of biological role, integrins alpha-1/beta-1, alpha-2/beta-1, alpha-10/beta-1 and alpha-11/beta-1 are receptors for collagen. Integrins alpha-1/beta-1 and alpha-2/beta-1 recognize the proline-hydroxylated sequence G-F-P-G-E-R in collagen. Integrins alpha-2/beta-1, alpha-3/beta-1, alpha-4/beta-1, alpha-5/beta-1, alpha-8/beta-1, alpha-10/beta-1, alpha-11/beta-1 and alpha-V/beta-1 are receptors for fibronectin. Alpha-4/beta-1 recognizes one or more domains within the alternatively spliced CS-1 and CS-5 regions of fibronectin. Integrin alpha-5/beta-1 is a receptor for fibrinogen. Integrin alpha-1/beta-1, alpha-2/beta-1, alpha-6/beta-1 and alpha-7/beta-1 are receptors for lamimin. Integrin alpha-6/beta-1 (ITGA6:ITGB1) is present in oocytes and is involved in sperm-egg fusion. Integrin alpha-4/beta-1 is a receptor for VCAM1 and recognizes the sequence Q-I-D-S in VCAM1. Integrin alpha-9/beta-1 is a receptor for VCAM1, cytotactin and osteopontin. It recognizes the sequence A-E-I-D-G-I-E-L in cytotactin. Integrin alpha-3/beta-1 is a receptor for epiligrin, thrombospondin and CSPG4. Integrin alpha-3/beta-1 provides a docking site for FAP (seprase) at invadopodia plasma membranes in a collagen-dependent manner and hence may participate in the adhesion, formation of invadopodia and matrix degradation processes, promoting cell invasion. Alpha-3/beta-1 may mediate with LGALS3 the stimulation by CSPG4 of endothelial cells migration. Integrin alpha-V/beta-1 is a receptor for vitronectin. Beta-1 integrins recognize the sequence R-G-D in a wide array of ligands. When associated with alpha-7/beta-1 integrin, regulates cell adhesion and laminin matrix deposition. Involved in promoting endothelial cell motility and angiogenesis. Involved in osteoblast compaction through the fibronectin fibrillogenesis cell-mediated matrix assembly process and the formation of mineralized bone nodules. May be involved in up-regulation of the activity of kinases such as PKC via binding to KRT1. Together with KRT1 and RACK1, serves as a platform for SRC activation or inactivation. ITGA4:ITGB1 binds to fractalkine (CX3CL1) and may act as its coreceptor in CX3CR1-dependent fractalkine signaling. ITGA4:ITGB1 and ITGA5:ITGB1 bind to PLA2G2A via a site (site 2) which is distinct from the classical ligand-binding site (site 1) and this induces integrin conformational changes and enhanced ligand binding to site 1. ITGA5:ITGB1 acts as a receptor for fibrillin-1 (FBN1) and mediates R-G-D-dependent cell adhesion to FBN1. ITGA5:ITGB1 acts as a receptor for fibronectin FN1 and mediates R-G-D-dependent cell adhesion to FN1. ITGA5:ITGB1 is a receptor for IL1B and binding is essential for IL1B signaling. ITGA5:ITGB3 is a receptor for soluble CD40LG and is required for CD40/CD40LG signaling. Plays an important role in myoblast differentiation and fusion during skeletal myogenesis. The sequence is that of Integrin beta-1 (ITGB1) from Gallus gallus (Chicken).